Here is a 397-residue protein sequence, read N- to C-terminus: Phosphoglycerate kinase (397 aa).

Substrate-binding positions include Asp-21 to Asn-23, Arg-37, His-60 to Arg-63, Arg-119, and Arg-152. ATP is bound by residues Lys-203, Gly-294, Glu-325, and Gly-354–Ser-357.

The protein belongs to the phosphoglycerate kinase family. As to quaternary structure, monomer.

The protein localises to the cytoplasm. It carries out the reaction (2R)-3-phosphoglycerate + ATP = (2R)-3-phospho-glyceroyl phosphate + ADP. Its pathway is carbohydrate degradation; glycolysis; pyruvate from D-glyceraldehyde 3-phosphate: step 2/5. The chain is Phosphoglycerate kinase from Chlorobium phaeobacteroides (strain DSM 266 / SMG 266 / 2430).